A 335-amino-acid chain; its full sequence is HTH-type transcriptional regulator MalR (335 aa).

The HTH lacI-type domain maps to methionine 1–glutamine 55. A DNA-binding region (H-T-H motif) is located at residues isoleucine 3–asparagine 22.

Its function is as follows. Repressor of glucanotransferase gene expression. The chain is HTH-type transcriptional regulator MalR from Clostridium butyricum.